The sequence spans 1575 residues: Ras GTPase-activating-like protein IQGAP2 (1575 aa).

Phosphoserine is present on Ser16. A Calponin-homology (CH) domain is found at 41 to 156 (LCHLEEAKRW…YCIHALSLYL (116 aa)). The residue at position 356 (Thr356) is a Phosphothreonine. The WW domain occupies 594–627 (ESSEGSWVTLNVQEKYNYYYNTDSKEGSWVPPEL). A phosphoserine mark is found at Ser595 and Ser599. 3 consecutive IQ domains span residues 690–719 (QTESVVKIQAFWKGFKQRQEYLHRQQVFAG), 720–749 (NVDSVVKIQSWFRMVTARKSYLSRLRYFED), and 750–779 (HKNEIVKIQSLLRASKARDDYKALVGSENP). 4 positions are modified to phosphothreonine: Thr782, Thr881, Thr1002, and Thr1269. The 250-residue stretch at 933–1182 (YLLLKLFKTA…QEFRKYFQEA (250 aa)) folds into the Ras-GAP domain. Phosphoserine occurs at positions 1279 and 1461.

Binds to activated CDC42 and RAC1 but does not seem to stimulate their GTPase activity. Associates with calmodulin. In Mus musculus (Mouse), this protein is Ras GTPase-activating-like protein IQGAP2 (Iqgap2).